A 212-amino-acid chain; its full sequence is MKSLFLILILCITIPLIFANESQYEDHPITKVTYGSMVKLAHVPTNFRLHSHKVSYGSSGGGSGQQSVTGFPENDDTNSLWVIKGPHGNRVLQGTVVKNGDIIRLVHSNTKKNLHSHLAVSPLTKQNEVSCFGENGEGDTGDNWIVETESGKEWMRGQVVRFKHADTKTYLQAIESAKYQNPIPGQIEISGGKSKNEDTKWRTEEGIYFDEK.

A signal peptide spans 1–19 (MKSLFLILILCITIPLIFA). A glycan (N-linked (GlcNAc...) asparagine) is linked at N20. MIR domains follow at residues 29 to 86 (ITKV…IKGP), 94 to 149 (GTVV…VETE), and 151 to 206 (GKEW…TEEG).

It localises to the secreted. The polypeptide is Stromal cell-derived factor 2-like protein (Dictyostelium discoideum (Social amoeba)).